Consider the following 197-residue polypeptide: Pyridoxal 5'-phosphate synthase subunit PdxT (197 aa).

Residue 53-55 (GES) coordinates L-glutamine. The active-site Nucleophile is the cysteine 85. Residues arginine 114 and 142 to 143 (IR) each bind L-glutamine. Active-site charge relay system residues include histidine 179 and glutamate 181.

Belongs to the glutaminase PdxT/SNO family. In terms of assembly, in the presence of PdxS, forms a dodecamer of heterodimers. Only shows activity in the heterodimer.

It carries out the reaction aldehydo-D-ribose 5-phosphate + D-glyceraldehyde 3-phosphate + L-glutamine = pyridoxal 5'-phosphate + L-glutamate + phosphate + 3 H2O + H(+). The catalysed reaction is L-glutamine + H2O = L-glutamate + NH4(+). The protein operates within cofactor biosynthesis; pyridoxal 5'-phosphate biosynthesis. Catalyzes the hydrolysis of glutamine to glutamate and ammonia as part of the biosynthesis of pyridoxal 5'-phosphate. The resulting ammonia molecule is channeled to the active site of PdxS. This Pyrococcus furiosus (strain ATCC 43587 / DSM 3638 / JCM 8422 / Vc1) protein is Pyridoxal 5'-phosphate synthase subunit PdxT.